The following is a 141-amino-acid chain: Hemoglobin subunit alpha-D (141 aa).

One can recognise a Globin domain in the interval 1–141 (MLTAEDKKLI…VAAVLAEKYR (141 aa)). Positions 58 and 87 each coordinate heme b.

Belongs to the globin family. As to quaternary structure, heterotetramer of two alpha-D chains and two beta chains. As to expression, red blood cells.

Its function is as follows. Involved in oxygen transport from the lung to the various peripheral tissues. The protein is Hemoglobin subunit alpha-D (HBAD) of Anas platyrhynchos (Mallard).